The sequence spans 524 residues: Cysteine--tRNA ligase (524 aa).

Cys29 provides a ligand contact to Zn(2+). The 'HIGH' region motif lies at 31 to 41 (PTVQAAPHVGH). Residues Cys207, His232, and Glu236 each coordinate Zn(2+). A compositionally biased stretch (low complexity) spans 246 to 258 (ARPASNAASADSP). Positions 246 to 273 (ARPASNAASADSPGPGGGEPGGGEPSSG) are disordered. Over residues 259-270 (GPGGGEPGGGEP) the composition is skewed to gly residues. A 'KMSKS' region motif is present at residues 291-295 (KMSKS). Lys294 is a binding site for ATP.

The protein belongs to the class-I aminoacyl-tRNA synthetase family. In terms of assembly, monomer. The cofactor is Zn(2+).

It localises to the cytoplasm. The catalysed reaction is tRNA(Cys) + L-cysteine + ATP = L-cysteinyl-tRNA(Cys) + AMP + diphosphate. In Frankia casuarinae (strain DSM 45818 / CECT 9043 / HFP020203 / CcI3), this protein is Cysteine--tRNA ligase.